The chain runs to 710 residues: Low-temperature-induced 78 kDa protein (710 aa).

Disordered stretches follow at residues 1-198 (MDQT…LDGQ), 225-269 (YQSK…RDLS), and 305-507 (GFGD…STYT). Positions 14-25 (QHPEEVEHHENG) are enriched in basic and acidic residues. Residues 29-41 (MFRKVKARAKKFK) show a composition bias toward basic residues. Basic and acidic residues predominate over residues 49–58 (QSNEHEQDHD). A compositionally biased stretch (acidic residues) spans 59–73 (LVEEDDDDDELEPEV). A compositionally biased stretch (basic and acidic residues) spans 138–168 (SDKEEKRDVPIHHPLSELSDREESRETHHES). Polar residues predominate over residues 169-187 (LNTPVSLLSGTEDVTSTFA). 5 repeat units span residues 303–316 (PVGF…ELEK), 317–331 (DFPT…KTET), 336–350 (NSPS…KTES), 357–370 (PMGF…ELEK), and 398–412 (NFPV…KNES). Positions 303–370 (PVGFGDESGA…GSESGAELEK (68 aa)) are 2 X 14 AA repeats of P-[MV]-G-F-G-[DS]-E-S-G-A-E-L-E-K. Basic and acidic residues-rich tracts occupy residues 313-331 (ELEK…KTET), 340-352 (RSHE…ESGN), 367-380 (ELEK…DSGR), 402-418 (RSHE…DKDV), 442-466 (EDKF…KTET), and 475-487 (SHPK…KESR). The segment at 317 to 412 (DFPTRSHDFD…SHELDLKNES (96 aa)) is 3 X 15 AA repeats of [DN]-[FS]-P-[STV]-R-S-H-[DE]-[FL]-D-[LM]-K-[NT]-E-[ST]. Repeat copies occupy residues 510–514 (FASML), 532–536 (VDEKL), and 550–554 (VTTKL). The tract at residues 510–600 (FASMLGYSGE…AFSDMVAEKL (91 aa)) is 5 X 5 AA repeats of [FV]-[ADT]-[EST]-[KM]-L. Residues 537–577 (TPVNEKDQETESAVTTKLPISGGGSGVEEQRGEDKSVSGRD) are disordered. The span at 564–577 (EEQRGEDKSVSGRD) shows a compositional bias: basic and acidic residues. Repeat copies occupy residues 579 to 583 (VAEKL) and 596 to 600 (VAEKL). A disordered region spans residues 601–710 (QIGGEEEKKE…STVVPVQKEL (110 aa)). Positions 605–626 (EEEKKETTTKEVEKISTEKAAS) are enriched in basic and acidic residues. Serine 626 carries the post-translational modification Phosphoserine. Gly residues predominate over residues 638–654 (GGGGMVGRIKGWFGGGA). A run of 2 repeats spans residues 648 to 670 (GWFG…EEAP) and 674 to 696 (GWFG…EESP). The segment at 648 to 696 (GWFGGGATDEVKPESPHSVEEAPKSSGWFGGGATEEVKPKSPHSVEESP) is 2 X 23 AA repeats. Composition is skewed to basic and acidic residues over residues 656 to 670 (DEVK…EEAP) and 682 to 693 (EEVKPKSPHSVE).

This sequence belongs to the LTI78/LTI65 family. In terms of tissue distribution, accumulates rapidly in leaves, stems, roots, flower petals, filaments, and sepals during cold-acclimation.

Its subcellular location is the cytoplasm. In terms of biological role, involved in responses to abiotic stresses. Regulates probably root elongation in cold conditions. This Arabidopsis thaliana (Mouse-ear cress) protein is Low-temperature-induced 78 kDa protein.